The primary structure comprises 108 residues: UPF0060 membrane protein YnfA (108 aa).

Over 1–5 (MLKTT) the chain is Periplasmic. A helical membrane pass occupies residues 6 to 26 (LLFFVTALCEIIGCFLTWLWI). The Cytoplasmic segment spans residues 27 to 30 (KRGA). A helical transmembrane segment spans residues 31-51 (SVWWLLPAAASLALFVWLLTL). Residues 52–60 (HPAASGRVY) are Periplasmic-facing. The helical transmembrane segment at 61–81 (AAYGGVYVCTALLWLRVVDGV) threads the bilayer. Over 82 to 84 (RLT) the chain is Cytoplasmic. A helical membrane pass occupies residues 85–105 (VYDWCGAPIALCGMLIIVVGW). Topologically, residues 106–108 (GRT) are periplasmic.

The protein belongs to the UPF0060 family.

It localises to the cell inner membrane. The protein is UPF0060 membrane protein YnfA of Salmonella dublin (strain CT_02021853).